The primary structure comprises 199 residues: Interleukin-11 (199 aa).

A signal peptide spans 1-21 (MNCVCRLVLVVLSLWPDRVVA). The interval 182–190 (HLTLDWAVR) is important for interaction with IL11RA and for the stimulation of cell proliferation.

Belongs to the IL-6 superfamily. As to quaternary structure, interacts with IL11RA to associate with IL6ST, giving rise to a multimeric signaling complex.

The protein localises to the secreted. Cytokine that stimulates the proliferation of hematopoietic stem cells and megakaryocyte progenitor cells and induces megakaryocyte maturation resulting in increased platelet production. Also promotes the proliferation of hepatocytes in response to liver damage. Binding to its receptor formed by IL6ST and IL11RA activates a signaling cascade that promotes cell proliferation. Signaling leads to the activation of intracellular protein kinases and the phosphorylation of STAT3. The interaction with the membrane-bound IL11RA and IL6ST stimulates 'classic signaling', whereas the binding of IL11 and soluble IL11RA to IL6ST stimulates 'trans-signaling'. The protein is Interleukin-11 of Rattus norvegicus (Rat).